The following is a 445-amino-acid chain: Trigger factor (445 aa).

Residues 163-248 (GDTVVIDYVG…IHEVKVKELP (86 aa)) form the PPIase FKBP-type domain. Positions 425–445 (KEVESAKDDADKEASDAKADK) are disordered.

The protein belongs to the FKBP-type PPIase family. Tig subfamily.

The protein localises to the cytoplasm. It carries out the reaction [protein]-peptidylproline (omega=180) = [protein]-peptidylproline (omega=0). Involved in protein export. Acts as a chaperone by maintaining the newly synthesized protein in an open conformation. Functions as a peptidyl-prolyl cis-trans isomerase. The sequence is that of Trigger factor from Lacticaseibacillus casei (strain BL23) (Lactobacillus casei).